The following is a 131-amino-acid chain: Fimbrial assembly protein, serogroups C1 and C2 (131 aa).

This Dichelobacter nodosus (Bacteroides nodosus) protein is Fimbrial assembly protein, serogroups C1 and C2 (fimB).